We begin with the raw amino-acid sequence, 248 residues long: 3-deoxy-manno-octulosonate cytidylyltransferase (248 aa).

The protein belongs to the KdsB family.

It localises to the cytoplasm. It catalyses the reaction 3-deoxy-alpha-D-manno-oct-2-ulosonate + CTP = CMP-3-deoxy-beta-D-manno-octulosonate + diphosphate. The protein operates within nucleotide-sugar biosynthesis; CMP-3-deoxy-D-manno-octulosonate biosynthesis; CMP-3-deoxy-D-manno-octulosonate from 3-deoxy-D-manno-octulosonate and CTP: step 1/1. It functions in the pathway bacterial outer membrane biogenesis; lipopolysaccharide biosynthesis. In terms of biological role, activates KDO (a required 8-carbon sugar) for incorporation into bacterial lipopolysaccharide in Gram-negative bacteria. This chain is 3-deoxy-manno-octulosonate cytidylyltransferase, found in Salmonella arizonae (strain ATCC BAA-731 / CDC346-86 / RSK2980).